A 156-amino-acid polypeptide reads, in one-letter code: ATP synthase subunit b (156 aa).

The helical transmembrane segment at 11 to 31 threads the bilayer; sequence AIAFVLFVLFCMKYIWPPIMA.

This sequence belongs to the ATPase B chain family. In terms of assembly, F-type ATPases have 2 components, F(1) - the catalytic core - and F(0) - the membrane proton channel. F(1) has five subunits: alpha(3), beta(3), gamma(1), delta(1), epsilon(1). F(0) has three main subunits: a(1), b(2) and c(10-14). The alpha and beta chains form an alternating ring which encloses part of the gamma chain. F(1) is attached to F(0) by a central stalk formed by the gamma and epsilon chains, while a peripheral stalk is formed by the delta and b chains.

The protein resides in the cell inner membrane. F(1)F(0) ATP synthase produces ATP from ADP in the presence of a proton or sodium gradient. F-type ATPases consist of two structural domains, F(1) containing the extramembraneous catalytic core and F(0) containing the membrane proton channel, linked together by a central stalk and a peripheral stalk. During catalysis, ATP synthesis in the catalytic domain of F(1) is coupled via a rotary mechanism of the central stalk subunits to proton translocation. Functionally, component of the F(0) channel, it forms part of the peripheral stalk, linking F(1) to F(0). In Yersinia enterocolitica serotype O:8 / biotype 1B (strain NCTC 13174 / 8081), this protein is ATP synthase subunit b.